A 1151-amino-acid polypeptide reads, in one-letter code: Error-prone DNA polymerase (1151 aa).

The disordered stretch occupies residues 1108 to 1151 (HPVPSGDALIEPLNDDRRDHADAPAQKIRHPRNVRILPPSRDFH).

The protein belongs to the DNA polymerase type-C family. DnaE2 subfamily.

The protein resides in the cytoplasm. It carries out the reaction DNA(n) + a 2'-deoxyribonucleoside 5'-triphosphate = DNA(n+1) + diphosphate. Its function is as follows. DNA polymerase involved in damage-induced mutagenesis and translesion synthesis (TLS). It is not the major replicative DNA polymerase. The chain is Error-prone DNA polymerase from Bradyrhizobium diazoefficiens (strain JCM 10833 / BCRC 13528 / IAM 13628 / NBRC 14792 / USDA 110).